A 517-amino-acid chain; its full sequence is MGSAVTSDHSAKGGATALMPYDEVLRGYEPVLGLETHVELGTRSKMFCSCATTFGAEPNTQVCPVCLALPGALPVVNSAAVESAIRLGLALNCSIAEWCRFARKNYFYPDMPKNYQISQYDEPLCYDGYLDVTVDTPEGPREFRIGIERVHMEEDTGKTSHVGGADGRIHGAEYSTVDYNRAGIPLLEIVTKPIEDAGEWAPQVARAYVRELRDLIRALGISDVRMEEGSLRCDVNVSLKPRGSTEWGTRTETKNVNSLRSIERAVRHEIERQGGVLSAGGRVVQETRHFQESTGTTVAGRSKEEAQDYRYFPDPDLVPVAPDREWVEQLRATLPELPSAKRRRLKAEWNLTDKELQDLVNANAVDLVEQTVAAGAPPAEARKWWLNDLSRRATETGVELSELPITPAQVARVVELVAEGSLTNKLARQVVDGVLAGEGEPDEVVEARGLRVVSDDAALGAIVDQAIANNADAAEKVRNGKIAAVGALVGAVMRETKGQADAGRARQLILERLGVSG.

Belongs to the GatB/GatE family. GatB subfamily. As to quaternary structure, heterotrimer of A, B and C subunits.

The enzyme catalyses L-glutamyl-tRNA(Gln) + L-glutamine + ATP + H2O = L-glutaminyl-tRNA(Gln) + L-glutamate + ADP + phosphate + H(+). It carries out the reaction L-aspartyl-tRNA(Asn) + L-glutamine + ATP + H2O = L-asparaginyl-tRNA(Asn) + L-glutamate + ADP + phosphate + 2 H(+). Allows the formation of correctly charged Asn-tRNA(Asn) or Gln-tRNA(Gln) through the transamidation of misacylated Asp-tRNA(Asn) or Glu-tRNA(Gln) in organisms which lack either or both of asparaginyl-tRNA or glutaminyl-tRNA synthetases. The reaction takes place in the presence of glutamine and ATP through an activated phospho-Asp-tRNA(Asn) or phospho-Glu-tRNA(Gln). This Thermobifida fusca (strain YX) protein is Aspartyl/glutamyl-tRNA(Asn/Gln) amidotransferase subunit B.